Reading from the N-terminus, the 250-residue chain is Cobalt transport protein CbiM (250 aa).

The signal sequence occupies residues 1 to 25 (MKQNIKLGVIAALMLIVLTPVTSNA). 6 consecutive transmembrane segments (helical) span residues 33 to 53 (LPVKWSIAWGVIFIPFFLVGL), 68 to 88 (VLLALCGAFVFVLSALKIPSV), 100 to 120 (LGAIMFGPSVMFVLGTIVLIF), 132 to 152 (TLGANAFSMAIIGPIISFLIF), 163 to 183 (AMPVFLAAAIGDLATYTVTSI), and 205 to 225 (GIFFMTQIPIAIAEGILTVIV).

It belongs to the CbiM family. In terms of assembly, forms an energy-coupling factor (ECF) transporter complex composed of an ATP-binding protein (A component, CbiO), a transmembrane protein (T component, CbiQ) and 2 possible substrate-capture proteins (S components, CbiM and CbiN) of unknown stoichimetry.

The protein resides in the cell membrane. It participates in cofactor biosynthesis; adenosylcobalamin biosynthesis. In terms of biological role, part of the energy-coupling factor (ECF) transporter complex CbiMNOQ involved in cobalt import. The sequence is that of Cobalt transport protein CbiM from Clostridioides difficile (strain R20291) (Peptoclostridium difficile).